A 327-amino-acid chain; its full sequence is Serpentine receptor class gamma-2 (327 aa).

Helical transmembrane passes span 35–55, 70–90, 157–177, 181–203, 244–264, and 277–297; these read LVQF…LYIL, ILFI…IFFA, MKYA…NIII, LPVY…ATMT, IASF…SLFA, and FLLP…MVMA.

This sequence belongs to the nematode receptor-like protein srg family.

It is found in the membrane. The chain is Serpentine receptor class gamma-2 (srg-2) from Caenorhabditis elegans.